A 158-amino-acid polypeptide reads, in one-letter code: SsrA-binding protein (158 aa).

The interval 132–158 (KKTHDKRETEKKRDWNREKARLMRDKG) is disordered. Basic and acidic residues predominate over residues 136 to 158 (DKRETEKKRDWNREKARLMRDKG).

The protein belongs to the SmpB family.

The protein localises to the cytoplasm. Its function is as follows. Required for rescue of stalled ribosomes mediated by trans-translation. Binds to transfer-messenger RNA (tmRNA), required for stable association of tmRNA with ribosomes. tmRNA and SmpB together mimic tRNA shape, replacing the anticodon stem-loop with SmpB. tmRNA is encoded by the ssrA gene; the 2 termini fold to resemble tRNA(Ala) and it encodes a 'tag peptide', a short internal open reading frame. During trans-translation Ala-aminoacylated tmRNA acts like a tRNA, entering the A-site of stalled ribosomes, displacing the stalled mRNA. The ribosome then switches to translate the ORF on the tmRNA; the nascent peptide is terminated with the 'tag peptide' encoded by the tmRNA and targeted for degradation. The ribosome is freed to recommence translation, which seems to be the essential function of trans-translation. The chain is SsrA-binding protein from Brucella anthropi (strain ATCC 49188 / DSM 6882 / CCUG 24695 / JCM 21032 / LMG 3331 / NBRC 15819 / NCTC 12168 / Alc 37) (Ochrobactrum anthropi).